Here is a 63-residue protein sequence, read N- to C-terminus: Large ribosomal subunit protein uL29 (63 aa).

It belongs to the universal ribosomal protein uL29 family.

This is Large ribosomal subunit protein uL29 from Serratia proteamaculans (strain 568).